The following is a 397-amino-acid chain: MELYPGYLEDHFNIHKLSISSASPPEYMTSASTQFAAPVRMGAYDRPPPVGMWSHEQFKVDNGQATSASTIMEAEMKFENRLEEIPQVVLEEGRNVDQEASKPPDKVLRRLAQNREAARKSRLRKKAYIQQLETSRLKLAQLEQELQRARQQAVYANGSLREPNLGFTGPIDPGALGFEIKYSHWVDEQNRNTGELRNALLQGQTTDQDLELKLLVEAGLDNYNRLFEMKEEAANSDVFYIMSGMWKTPTERFFLWIGGFRPSEVLKNLRPQLEPLTDKQVVEVGGLQQTSMQVEDALSQGMDKLKQTIADSLTAADPFDSPEAYMVHMANAVEQLRSLVQFVTQADHLRQQTLQEMHRILTTRQAARGLLALGDYFQRFRALSSLWAARPRDSGIS.

The bZIP domain occupies 104 to 148; that stretch reads PDKVLRRLAQNREAARKSRLRKKAYIQQLETSRLKLAQLEQELQR. Residues 106–126 are basic motif; the sequence is KVLRRLAQNREAARKSRLRKK. Positions 132–146 are leucine-zipper; it reads LETSRLKLAQLEQEL. Residues 175-390 enclose the DOG1 domain; it reads ALGFEIKYSH…RALSSLWAAR (216 aa).

Belongs to the bZIP family.

The protein localises to the nucleus. Its function is as follows. Transcriptional regulator involved in defense response. The protein is Transcription factor TGAL6 of Oryza sativa subsp. japonica (Rice).